We begin with the raw amino-acid sequence, 507 residues long: Histidine ammonia-lyase (507 aa).

A cross-link (5-imidazolinone (Ala-Gly)) is located at residues 141 to 143; that stretch reads ASG. At serine 142 the chain carries 2,3-didehydroalanine (Ser).

Belongs to the PAL/histidase family. In terms of processing, contains an active site 4-methylidene-imidazol-5-one (MIO), which is formed autocatalytically by cyclization and dehydration of residues Ala-Ser-Gly.

It is found in the cytoplasm. The enzyme catalyses L-histidine = trans-urocanate + NH4(+). Its pathway is amino-acid degradation; L-histidine degradation into L-glutamate; N-formimidoyl-L-glutamate from L-histidine: step 1/3. In Burkholderia pseudomallei (strain 668), this protein is Histidine ammonia-lyase.